Consider the following 754-residue polypeptide: Exocyst complex component EXO84A (754 aa).

2 disordered regions span residues 514–540 (RILP…EQRE) and 734–754 (GHGE…YTSN). The segment covering 518–527 (QGTSQSTPRR) has biased composition (polar residues). The segment covering 528–540 (GSSDRQNRPEQRE) has biased composition (basic and acidic residues). Over residues 741 to 754 (TSPSVSSAKSYTSN) the composition is skewed to polar residues.

Belongs to the EXO84 family. As to quaternary structure, the exocyst complex is composed of SEC3, SEC5, SEC6, SEC8, SEC10, EXO70A1 and EXO84.

In terms of biological role, component of the exocyst complex involved in the docking of exocytic vesicles with fusion sites on the plasma membrane during regulated or polarized secretion. Involved in polarized cell growth and organ morphogenesis. During cytokinesis, involved in cell plate initiation, cell plate maturation and formation of new primary cell wall. This Arabidopsis thaliana (Mouse-ear cress) protein is Exocyst complex component EXO84A (EXO84A).